Consider the following 201-residue polypeptide: ADP-ribosylation factor-related protein 1 (201 aa).

An N-acetylmethionine modification is found at methionine 1. GTP contacts are provided by residues 24–31, 75–79, and 134–137; these read GLDNAGKT, DLGGQ, and NKQD.

The protein belongs to the small GTPase superfamily. Arf family. In terms of assembly, interacts with SYS1.

It is found in the golgi apparatus. Its subcellular location is the trans-Golgi network. Its function is as follows. Trans-Golgi-associated GTPase that regulates protein sorting. Controls the targeting of ARL1 and its effector to the trans-Golgi. Required for the lipidation of chylomicrons in the intestine and required for VLDL lipidation in the liver. In Pongo abelii (Sumatran orangutan), this protein is ADP-ribosylation factor-related protein 1 (ARFRP1).